The chain runs to 874 residues: Alanine--tRNA ligase (874 aa).

The Zn(2+) site is built by histidine 562, histidine 566, cysteine 663, and histidine 667.

This sequence belongs to the class-II aminoacyl-tRNA synthetase family. Requires Zn(2+) as cofactor.

The protein resides in the cytoplasm. The catalysed reaction is tRNA(Ala) + L-alanine + ATP = L-alanyl-tRNA(Ala) + AMP + diphosphate. Its function is as follows. Catalyzes the attachment of alanine to tRNA(Ala) in a two-step reaction: alanine is first activated by ATP to form Ala-AMP and then transferred to the acceptor end of tRNA(Ala). Also edits incorrectly charged Ser-tRNA(Ala) and Gly-tRNA(Ala) via its editing domain. The protein is Alanine--tRNA ligase of Bordetella parapertussis (strain 12822 / ATCC BAA-587 / NCTC 13253).